The following is a 343-amino-acid chain: Protein phosphatase 2C homolog 7, mitochondrial (343 aa).

Residues 1-39 constitute a mitochondrion transit peptide; sequence MFANVGFRTLRVSRGPLYGSCSQIISFSKRTFYSSAKSG. The region spanning 76–342 is the PPM-type phosphatase domain; it reads IYQKLKDSIR…DDITVVVVRV (267 aa). Residues Asp-109, Gly-110, and Asp-265 each contribute to the Mn(2+) site.

The cofactor is Mg(2+). Requires Mn(2+) as cofactor.

The protein resides in the mitochondrion. The enzyme catalyses O-phospho-L-seryl-[protein] + H2O = L-seryl-[protein] + phosphate. It carries out the reaction O-phospho-L-threonyl-[protein] + H2O = L-threonyl-[protein] + phosphate. Functionally, protein phosphatase which positively regulates biosynthesis of the ubiquinone, coenzyme Q. Dephosphorylates and activates the ubiquinone biosynthesis protein CAT5/COQ7. Also dephosphorylates CIT1 on 'Ser-462', which leads to its activation. The sequence is that of Protein phosphatase 2C homolog 7, mitochondrial (PTC7) from Saccharomyces cerevisiae (strain ATCC 204508 / S288c) (Baker's yeast).